The following is a 192-amino-acid chain: dCTP deaminase, dUMP-forming (192 aa).

DCTP-binding positions include 101–106, aspartate 119, 127–129, glutamine 148, tyrosine 162, and glutamine 174; these read KSSLGR and TLE. Catalysis depends on glutamate 129, which acts as the Proton donor/acceptor. The interval 171-192 is disordered; sequence YQGQRGPTPSRSWQSWHTWPTR.

It belongs to the dCTP deaminase family. In terms of assembly, homotrimer.

It carries out the reaction dCTP + 2 H2O = dUMP + NH4(+) + diphosphate. Its pathway is pyrimidine metabolism; dUMP biosynthesis; dUMP from dCTP: step 1/1. Its function is as follows. Bifunctional enzyme that catalyzes both the deamination of dCTP to dUTP and the hydrolysis of dUTP to dUMP without releasing the toxic dUTP intermediate. The sequence is that of dCTP deaminase, dUMP-forming from Salinispora arenicola (strain CNS-205).